Consider the following 123-residue polypeptide: Small ribosomal subunit protein uS12cz/uS12cy (123 aa).

It belongs to the universal ribosomal protein uS12 family. As to quaternary structure, part of the 30S ribosomal subunit.

The protein localises to the plastid. The protein resides in the chloroplast. Functionally, with S4 and S5 plays an important role in translational accuracy. Located at the interface of the 30S and 50S subunits. In Phaseolus vulgaris (Kidney bean), this protein is Small ribosomal subunit protein uS12cz/uS12cy (rps12-A).